Consider the following 428-residue polypeptide: 3-phosphoshikimate 1-carboxyvinyltransferase (428 aa).

Positions 20, 21, and 25 each coordinate 3-phosphoshikimate. Phosphoenolpyruvate is bound at residue Lys20. Phosphoenolpyruvate is bound by residues Gly92 and Arg120. 3-phosphoshikimate contacts are provided by Ser166, Gln168, Asp314, and Lys341. Gln168 is a binding site for phosphoenolpyruvate. The Proton acceptor role is filled by Asp314. Phosphoenolpyruvate contacts are provided by Arg345 and Arg387.

This sequence belongs to the EPSP synthase family. As to quaternary structure, monomer.

Its subcellular location is the cytoplasm. It carries out the reaction 3-phosphoshikimate + phosphoenolpyruvate = 5-O-(1-carboxyvinyl)-3-phosphoshikimate + phosphate. It functions in the pathway metabolic intermediate biosynthesis; chorismate biosynthesis; chorismate from D-erythrose 4-phosphate and phosphoenolpyruvate: step 6/7. Functionally, catalyzes the transfer of the enolpyruvyl moiety of phosphoenolpyruvate (PEP) to the 5-hydroxyl of shikimate-3-phosphate (S3P) to produce enolpyruvyl shikimate-3-phosphate and inorganic phosphate. The polypeptide is 3-phosphoshikimate 1-carboxyvinyltransferase (Listeria welshimeri serovar 6b (strain ATCC 35897 / DSM 20650 / CCUG 15529 / CIP 8149 / NCTC 11857 / SLCC 5334 / V8)).